The primary structure comprises 2216 residues: Protein Ycf2 (2216 aa).

Residue 1567–1574 (GSIGTGRS) coordinates ATP.

This sequence belongs to the Ycf2 family.

The protein localises to the plastid stroma. Probable ATPase of unknown function. Its presence in a non-photosynthetic plant (Epifagus virginiana) and experiments in tobacco indicate that it has an essential function which is probably not related to photosynthesis. This chain is Protein Ycf2, found in Epifagus virginiana (Beechdrops).